A 157-amino-acid polypeptide reads, in one-letter code: Phosphopantetheine adenylyltransferase (157 aa).

A substrate-binding site is contributed by T10. ATP contacts are provided by residues 10–11 (TF) and H18. Substrate-binding residues include K42, L74, and R88. ATP-binding positions include 89-91 (GLR), E99, and 124-130 (NAFISSS).

It belongs to the bacterial CoaD family. In terms of assembly, homohexamer. It depends on Mg(2+) as a cofactor.

It localises to the cytoplasm. It carries out the reaction (R)-4'-phosphopantetheine + ATP + H(+) = 3'-dephospho-CoA + diphosphate. Its pathway is cofactor biosynthesis; coenzyme A biosynthesis; CoA from (R)-pantothenate: step 4/5. Its function is as follows. Reversibly transfers an adenylyl group from ATP to 4'-phosphopantetheine, yielding dephospho-CoA (dPCoA) and pyrophosphate. This chain is Phosphopantetheine adenylyltransferase, found in Helicobacter pylori (strain J99 / ATCC 700824) (Campylobacter pylori J99).